We begin with the raw amino-acid sequence, 376 residues long: uncharacterized protein (376 aa).

Helical transmembrane passes span 153–173 and 188–208; these read QGTL…VLFA and HRPF…LAVY.

The protein localises to the membrane. This is an uncharacterized protein from Saccharomyces cerevisiae (strain ATCC 204508 / S288c) (Baker's yeast).